A 463-amino-acid chain; its full sequence is Probable ECA polymerase (463 aa).

11 consecutive transmembrane segments (helical) span residues 6 to 26 (FGGL…LTWM), 39 to 59 (FSLL…VLVF), 65 to 85 (VVPV…YAVY), 112 to 132 (ANLT…IFFL), 154 to 174 (GVAL…VYFL), 180 to 200 (AWLL…VIVG), 201 to 221 (GTRA…IVRG), 222 to 242 (WITL…MFWL), 340 to 360 (LVVM…GLVI), 377 to 397 (YKAA…IVLT), and 408 to 428 (VVFF…LYWL).

Belongs to the WzyE family. As to quaternary structure, probably part of a complex composed of WzxE, WzyE and WzzE.

Its subcellular location is the cell inner membrane. It functions in the pathway bacterial outer membrane biogenesis; enterobacterial common antigen biosynthesis. Its function is as follows. Probably involved in the polymerization of enterobacterial common antigen (ECA) trisaccharide repeat units. The sequence is that of Probable ECA polymerase from Pectobacterium atrosepticum (strain SCRI 1043 / ATCC BAA-672) (Erwinia carotovora subsp. atroseptica).